The primary structure comprises 393 residues: Cyclic GMP-AMP synthase-like receptor 1 (393 aa).

Positions 89, 91, and 205 each coordinate Mg(2+). Residue 89-91 (EFD) participates in ATP binding. Residues Asp-205 and 251 to 258 (RASFYEAE) each bind GTP. ATP contacts are provided by residues 255–258 (YEAE), Lys-276, and 289–293 (SYHIK).

It belongs to the mab-21 family. Mg(2+) serves as cofactor. The cofactor is Mn(2+).

The catalysed reaction is GTP + ATP = 3',2'-cGAMP + 2 diphosphate. It catalyses the reaction GTP + ATP = pppA(2'-5')pG + diphosphate. The enzyme catalyses pppA(2'-5')pG = 3',2'-cGAMP + diphosphate. With respect to regulation, the enzyme activity is specifically activated by double-stranded RNA (dsRNA). Recognizes long dsRNA (&gt;30 bp) with no preference for 5' RNA phosphorylation. Nucleotidyltransferase that catalyzes the formation of cyclic GMP-AMP (3',2'-cGAMP) from ATP and GTP and plays a key role in innate immunity. Synthesizes 3',2'-cGAMP in a two-step reaction through production of the linear intermediate pppA(2'-5')pG. Acts as a key sensor of double-stranded RNA (dsRNA), the presence of dsRNA in the cytoplasm being a danger signal that triggers the immune responses. Directly binds dsRNA longer than 35 bp, activating the nucleotidyltransferase activity, leading to synthesis of 3',2'-cGAMP, a second messenger that binds to and activates Sting, thereby triggering the antiviral immune response via activation of the NF-kappa-B transcription factor Rel (Relish). This chain is Cyclic GMP-AMP synthase-like receptor 1, found in Drosophila simulans (Fruit fly).